Reading from the N-terminus, the 709-residue chain is Homeobox-leucine zipper protein HDG4 (709 aa).

The disordered stretch occupies residues 61–92 (ESGSGKSTGSGHDPVENTAIEQEPPAAKKKRY). Positions 88-147 (KKKRYHRHTASQIQQMEALFKENAHPDTKTRLRLSKKLGLSPIQVKFWFQNKRTQIKAQQ) form a DNA-binding region, homeobox. Residues 137 to 205 (QNKRTQIKAQ…LDRLRSIVSM (69 aa)) adopt a coiled-coil conformation. Residues 229 to 466 (AEEEKAIDME…LKRQCERMAS (238 aa)) enclose the START domain.

It belongs to the HD-ZIP homeobox family. Class IV subfamily. As to expression, expressed in flowers.

It localises to the nucleus. In terms of biological role, probable transcription factor. This is Homeobox-leucine zipper protein HDG4 from Arabidopsis thaliana (Mouse-ear cress).